Consider the following 510-residue polypeptide: Glycogen synthase (510 aa).

Residue Lys-18 participates in ADP-alpha-D-glucose binding.

Belongs to the glycosyltransferase 1 family. Bacterial/plant glycogen synthase subfamily.

It catalyses the reaction [(1-&gt;4)-alpha-D-glucosyl](n) + ADP-alpha-D-glucose = [(1-&gt;4)-alpha-D-glucosyl](n+1) + ADP + H(+). Its pathway is glycan biosynthesis; glycogen biosynthesis. In terms of biological role, synthesizes alpha-1,4-glucan chains using ADP-glucose. This Bordetella bronchiseptica (strain ATCC BAA-588 / NCTC 13252 / RB50) (Alcaligenes bronchisepticus) protein is Glycogen synthase.